The chain runs to 731 residues: T-cell activation Rho GTPase-activating protein (731 aa).

Positions 88 to 277 (QPLSIICGDS…FLIDNCFEIF (190 aa)) constitute a Rho-GAP domain. Disordered stretches follow at residues 288–421 (TSDD…AEDP), 464–507 (SLDA…IKKH), and 641–662 (HHVEDSRHRGSKEPLPGHGLSP). Polar residues predominate over residues 299 to 311 (SDVSTLQNDSAYD). Low complexity predominate over residues 319-329 (SNSSSGISSPS). Positions 380-399 (SMPSSQECLESRVTNQTLTK) are enriched in polar residues. The residue at position 400 (Ser400) is a Phosphoserine. The span at 464 to 480 (SLDASSDSSPVASPSSP) shows a compositional bias: low complexity. Basic and acidic residues-rich tracts occupy residues 494–503 (KTEKGKPSRE) and 641–652 (HHVEDSRHRGSK).

In terms of biological role, may function as a GTPase-activating protein and may play important roles during T-cell activation. The protein is T-cell activation Rho GTPase-activating protein (TAGAP) of Homo sapiens (Human).